We begin with the raw amino-acid sequence, 469 residues long: MKILPKLERKLRRLKKRVTRTSLFRKLDLVHESARKKAFQESCETYKNQIENEYEIRNSLPKLSRSDKEAFLSDGSFHQAVGRVLLVAEFFAMMPVKGVTGKHPSDLSFSWRNIRTCFSLLFIASSLANFGLSLFKVLNNPISFNSIKPIIFRGSVLLVLIVALNLARQWPQLMMYWHTVEKDLPQYKTQLTKWKMGHTISMVMLLGMMLSFAEHILSMVSAINYASFCNRTADPIQNYFLRTNDEIFFVTSYSTTLALWGKFQNVFSTFIWNYMDLFVMIVSIGLASKFRQLNDDLRNFKGMNMAPSYWSERRIQYRNICILCDKMDDAISLITMVSFSNNLYFICVQLLRSLNTMPSVAHAVYFYFSLIFLIGRTLAVSLYSSSVHDESRLTLRYLRCVPKESWCPEVKRFTEEVISDEVALTGMKFFHLTRKLVLSVAGTIVTYELVLIQFHEDNDLWDCDQSYYS.

The Cytoplasmic portion of the chain corresponds to Met1–Cys117. The chain crosses the membrane as a helical span at residues Phe118–Leu138. Topologically, residues Asn139–Ser146 are extracellular. Residues Ile147–Ala167 traverse the membrane as a helical segment. Topologically, residues Arg168 to Thr199 are cytoplasmic. The helical transmembrane segment at Ile200 to Val220 threads the bilayer. Over Ser221–Asn265 the chain is Extracellular. Asn230 is a glycosylation site (N-linked (GlcNAc...) asparagine). A helical membrane pass occupies residues Val266–Leu286. Residues Ala287–Ala330 are Cytoplasmic-facing. A helical membrane pass occupies residues Ile331–Leu351. Residues Arg352–Ser353 are Extracellular-facing. A helical transmembrane segment spans residues Leu354 to Ile374. Over Gly375–Lys435 the chain is Cytoplasmic. Residues Leu436 to Glu456 form a helical membrane-spanning segment. Residues Asp457–Ser469 are Extracellular-facing.

It belongs to the insect chemoreceptor superfamily. Gustatory receptor (GR) family. Gr5a subfamily. In terms of tissue distribution, expressed in Gr5a-expressing sugar-sensing cells.

It localises to the cell membrane. In terms of biological role, one of the few identified sugar gustatory receptors identified so far and which promotes the starvation-induced increase of feeding motivation. Required in combination with Gr64a to detect sucrose, maltose, and glucose. This is Gustatory receptor for sugar taste 64f (Gr64f) from Drosophila melanogaster (Fruit fly).